A 283-amino-acid polypeptide reads, in one-letter code: Pantothenate synthetase (283 aa).

ATP is bound at residue methionine 30–histidine 37. Histidine 37 functions as the Proton donor in the catalytic mechanism. Glutamine 61 contacts (R)-pantoate. Residue glutamine 61 coordinates beta-alanine. Glycine 149–aspartate 152 contributes to the ATP binding site. Glutamine 155 lines the (R)-pantoate pocket. ATP is bound by residues valine 178 and leucine 186–arginine 189.

Belongs to the pantothenate synthetase family. As to quaternary structure, homodimer.

It localises to the cytoplasm. The catalysed reaction is (R)-pantoate + beta-alanine + ATP = (R)-pantothenate + AMP + diphosphate + H(+). It functions in the pathway cofactor biosynthesis; (R)-pantothenate biosynthesis; (R)-pantothenate from (R)-pantoate and beta-alanine: step 1/1. Catalyzes the condensation of pantoate with beta-alanine in an ATP-dependent reaction via a pantoyl-adenylate intermediate. This is Pantothenate synthetase from Hydrogenovibrio crunogenus (strain DSM 25203 / XCL-2) (Thiomicrospira crunogena).